Here is a 356-residue protein sequence, read N- to C-terminus: tRNA N6-adenosine threonylcarbamoyltransferase (356 aa).

Residues histidine 115 and histidine 119 each contribute to the Fe cation site. Residues 139–143, aspartate 173, glycine 186, aspartate 190, and asparagine 291 contribute to the substrate site; that span reads LVSGG. A Fe cation-binding site is contributed by aspartate 319.

Belongs to the KAE1 / TsaD family. Fe(2+) is required as a cofactor.

It is found in the cytoplasm. It carries out the reaction L-threonylcarbamoyladenylate + adenosine(37) in tRNA = N(6)-L-threonylcarbamoyladenosine(37) in tRNA + AMP + H(+). Its function is as follows. Required for the formation of a threonylcarbamoyl group on adenosine at position 37 (t(6)A37) in tRNAs that read codons beginning with adenine. Is involved in the transfer of the threonylcarbamoyl moiety of threonylcarbamoyl-AMP (TC-AMP) to the N6 group of A37, together with TsaE and TsaB. TsaD likely plays a direct catalytic role in this reaction. The polypeptide is tRNA N6-adenosine threonylcarbamoyltransferase (Arthrobacter sp. (strain FB24)).